We begin with the raw amino-acid sequence, 255 residues long: MDSPCTSESIYNLIPSDLKEPPQHPRYTSLFRATIKNDMKKFKTAMKTMGPAKVEIPSPKDFLKKHSKEKTLPPKKKFNRCSPKKPAVPLRTDHPVMGIQSGKNFINTNAADVIMGVAKKPKPIYVDKRTGDKHDLETSGLFPKYINKKDYGITPEYICKRNEDVKKAQEEYDNYIQENLKKAAMKRLSDEEREAVLQGLKKNWEEVHKEFQSLSVFIDSVPKKIRKQKLEKEMKQLEHDISVIEKHKIIYIANK.

Residues 1-10 (MDSPCTSESI) show a composition bias toward polar residues. Disordered stretches follow at residues 1–25 (MDSP…PQHP) and 67–96 (SKEK…DHPV). A compositionally biased stretch (basic residues) spans 73–83 (PPKKKFNRCSP). An SH3-binding motif is present at residues 83–89 (PKKPAVP). The Enkurin domain maps to 160–252 (KRNEDVKKAQ…VIEKHKIIYI (93 aa)). The interval 160-255 (KRNEDVKKAQ…KHKIIYIANK (96 aa)) is interaction with TRPC proteins. The 12-residue stretch at 176–187 (IQENLKKAAMKR) folds into the IQ domain.

In terms of assembly, microtubule inner protein component of sperm flagellar doublet microtubules. Binds calmodulin via its IQ domain. Interacts with TRPC1, TRPC2, TRPC5, but not TRPC3. Interacts with CFAP45. As to expression, high expression in testis and vomeronasal organ and lower expression in ovary, heart, lung, and brain. Not expressed in other tissues.

It localises to the cytoplasm. It is found in the cytoskeleton. The protein localises to the cilium axoneme. The protein resides in the flagellum axoneme. Functionally, adapter that functions to localize a calcium-sensitive signal transduction machinery in sperm to a calcium-permeable ion channel. Microtubule inner protein (MIP) part of the dynein-decorated doublet microtubules (DMTs) in cilia axoneme, which is required for motile cilia beating. The polypeptide is Enkurin (Enkur) (Mus musculus (Mouse)).